Consider the following 368-residue polypeptide: Homoserine O-acetyltransferase (368 aa).

The 312-residue stretch at 43-354 folds into the AB hydrolase-1 domain; it reads NVVVVCHALT…DYGHDAFLVE (312 aa). Ser-148 serves as the catalytic Nucleophile. Substrate is bound at residue Arg-220. Residues Asp-314 and His-348 contribute to the active site. Residue Asp-349 participates in substrate binding.

Belongs to the AB hydrolase superfamily. MetX family. Homodimer.

Its subcellular location is the cytoplasm. It catalyses the reaction L-homoserine + acetyl-CoA = O-acetyl-L-homoserine + CoA. It participates in amino-acid biosynthesis; L-methionine biosynthesis via de novo pathway; O-acetyl-L-homoserine from L-homoserine: step 1/1. Functionally, transfers an acetyl group from acetyl-CoA to L-homoserine, forming acetyl-L-homoserine. The sequence is that of Homoserine O-acetyltransferase from Sulfurimonas autotrophica (strain ATCC BAA-671 / DSM 16294 / JCM 11897 / OK10).